The following is an 878-amino-acid chain: Phosphoenolpyruvate carboxylase (878 aa).

Catalysis depends on residues histidine 138 and lysine 545.

Belongs to the PEPCase type 1 family. Requires Mg(2+) as cofactor.

The catalysed reaction is oxaloacetate + phosphate = phosphoenolpyruvate + hydrogencarbonate. In terms of biological role, forms oxaloacetate, a four-carbon dicarboxylic acid source for the tricarboxylic acid cycle. This Shewanella loihica (strain ATCC BAA-1088 / PV-4) protein is Phosphoenolpyruvate carboxylase.